Consider the following 275-residue polypeptide: MAVKKYKPYTPSRRFMSVVDSSDITAKPSVRKLLVKLPARAGRNNQGRITSRHREAGAKKLYRIIDFKRNKYGVPGRVATIEYDPYRNCRIALVVYRDGDKRYIIQPSGLKVGDTVEAAEAGLDVLPGNAMKLKNIPVGTLVHNIEMKPGKGGQLARSAGAYAQIMGREDKYVILRLPSGEMRKILGECMATIGVVGNEEYANIVIGKAGRNRHRGIRPQTRGSAMNPVDHPHGGGEGKTGPSGHPVTPWGMPTKGYKTRRKKPSDKLIISRRKK.

Positions 212-275 (NRHRGIRPQT…DKLIISRRKK (64 aa)) are disordered. The segment covering 257-275 (YKTRRKKPSDKLIISRRKK) has biased composition (basic residues).

It belongs to the universal ribosomal protein uL2 family. As to quaternary structure, part of the 50S ribosomal subunit. Forms a bridge to the 30S subunit in the 70S ribosome.

Its function is as follows. One of the primary rRNA binding proteins. Required for association of the 30S and 50S subunits to form the 70S ribosome, for tRNA binding and peptide bond formation. It has been suggested to have peptidyltransferase activity; this is somewhat controversial. Makes several contacts with the 16S rRNA in the 70S ribosome. The chain is Large ribosomal subunit protein uL2 from Nitratiruptor sp. (strain SB155-2).